We begin with the raw amino-acid sequence, 516 residues long: L-amino-acid oxidase (516 aa).

A signal peptide spans M1–C18. A disulfide bond links C28 and C189. FAD contacts are provided by residues M61–S62, E81–A82, R89, and G103–R106. Substrate is bound by residues R106 and H239. An FAD-binding site is contributed by V279. A disulfide bridge links C349 with C430. N379 carries an N-linked (GlcNAc...) asparagine glycan. Position 390 (Y390) interacts with substrate. FAD contacts are provided by residues E475 and G482 to T487. G482–W483 serves as a coordination point for substrate.

This sequence belongs to the flavin monoamine oxidase family. FIG1 subfamily. Homodimer; non-covalently linked. FAD is required as a cofactor. In terms of processing, N-glycosylated. Expressed by the venom gland.

It localises to the secreted. It catalyses the reaction an L-alpha-amino acid + O2 + H2O = a 2-oxocarboxylate + H2O2 + NH4(+). Its function is as follows. Catalyzes an oxidative deamination of predominantly hydrophobic and aromatic L-amino acids, thus producing hydrogen peroxide that may contribute to the diverse toxic effects of this enzyme. Exhibits diverse biological activities, such as hemorrhage, hemolysis, edema, apoptosis of vascular endothelial cells or tumor cell lines, antibacterial and antiparasitic activities, as well as regulation of platelet aggregation. Effects of snake L-amino oxidases on platelets are controversial, since they either induce aggregation or inhibit agonist-induced aggregation. These different effects are probably due to different experimental conditions. The chain is L-amino-acid oxidase from Sistrurus catenatus edwardsii (Desert massasauga).